We begin with the raw amino-acid sequence, 119 residues long: NADH-quinone oxidoreductase subunit A (119 aa).

The next 3 membrane-spanning stretches (helical) occupy residues 7-27 (FPVL…VSIG), 63-83 (LVAI…PWGV), and 88-108 (IGWP…LGFA).

It belongs to the complex I subunit 3 family. As to quaternary structure, NDH-1 is composed of 14 different subunits. Subunits NuoA, H, J, K, L, M, N constitute the membrane sector of the complex.

The protein resides in the cell inner membrane. The enzyme catalyses a quinone + NADH + 5 H(+)(in) = a quinol + NAD(+) + 4 H(+)(out). Its function is as follows. NDH-1 shuttles electrons from NADH, via FMN and iron-sulfur (Fe-S) centers, to quinones in the respiratory chain. The immediate electron acceptor for the enzyme in this species is believed to be ubiquinone. Couples the redox reaction to proton translocation (for every two electrons transferred, four hydrogen ions are translocated across the cytoplasmic membrane), and thus conserves the redox energy in a proton gradient. The sequence is that of NADH-quinone oxidoreductase subunit A from Paraburkholderia phytofirmans (strain DSM 17436 / LMG 22146 / PsJN) (Burkholderia phytofirmans).